The sequence spans 974 residues: Villin-4 (974 aa).

6 Gelsolin-like repeats span residues 29–79 (FIPT…DEAG), 150–190 (VHVK…QERA), 262–305 (GQAN…DDRK), 394–451 (LQVW…EERG), 532–572 (MQAI…TDQE), and 634–675 (LKVT…KNKL). The tract at residues 738–783 (VKNGGTPVADKPKRRTPASYGGRASVPDKSQQRSRSMSFSPDRVRV) is disordered. Phosphoserine occurs at positions 777 and 787. Disordered regions lie at residues 801–833 (NARN…APKS) and 845–930 (KIPP…PVSD). The span at 824–833 (SSKFAPAPKS) shows a compositional bias: low complexity. A compositionally biased stretch (basic and acidic residues) spans 872–887 (NSKEQEEKKENDKEEG). Positions 888-898 (SMSSRIESLTI) are enriched in polar residues. Ser890 is subject to Phosphoserine. In terms of domain architecture, HP spans 909 to 974 (EEDLPAHPYD…NKFKMAVQLF (66 aa)). A compositionally biased stretch (basic and acidic residues) spans 912–921 (LPAHPYDRLK).

The protein belongs to the villin/gelsolin family. Preferentially expressed in vegetative tissues. Detected in the whole seedling, hypocotyl, cotyledon, primary root, roots hair cells and trichomes. Expressed in flowers but not in the silique.

It is found in the cytoplasm. The protein resides in the cytoskeleton. Functionally, binds actin and actin filament bundles in a Ca(2+)-insensitive manner, but caps the barbed end of actin filaments and is able to sever them in a calcium-dependent manner. Involved in root hair growth through regulating actin organization in a Ca(2+)-dependent manner. The chain is Villin-4 from Arabidopsis thaliana (Mouse-ear cress).